Consider the following 910-residue polypeptide: Dimethylsulfide dehydrogenase subunit alpha (910 aa).

The segment at residues 1–28 (MLRTTRRTLMQGASLVGAGLFAAGRGWA) is a signal peptide (tat-type signal). Positions 59–123 (DYVGKAAHCI…IHSTSMYEAD (65 aa)) constitute a 4Fe-4S Mo/W bis-MGD-type domain. Residues His66, Cys70, Cys74, and Cys109 each coordinate [4Fe-4S] cluster.

Belongs to the prokaryotic molybdopterin-containing oxidoreductase family. In terms of assembly, heterotrimer of alpha, beta and gamma subunits. The cofactor is [4Fe-4S] cluster. Mo-bis(molybdopterin guanine dinucleotide) serves as cofactor. Predicted to be exported by the Tat system. The position of the signal peptide cleavage has been experimentally proven.

The protein localises to the periplasm. The enzyme catalyses 2 Fe(III)-[cytochrome c2] + dimethyl sulfide + H2O = 2 Fe(II)-[cytochrome c2] + dimethyl sulfoxide + 2 H(+). Functionally, allows photoautotrophic growth on dimethyl sulfide (DMS) as the sole electron donor. The protein is Dimethylsulfide dehydrogenase subunit alpha (ddhA) of Rhodovulum sulfidophilum (Rhodobacter sulfidophilus).